The primary structure comprises 605 residues: Apoptosis-inducing factor 3 (605 aa).

Over residues 18-29 the composition is skewed to basic and acidic residues; sequence VLPEKERGKEEL. Positions 18–44 are disordered; sequence VLPEKERGKEELSASGKGSPRGYQGNG. The region spanning 70–165 is the Rieske domain; sequence ATVCHVKDLE…VKIEKEKVTI (96 aa). [2Fe-2S] cluster contacts are provided by C109, H111, C128, and H131. FAD-binding positions include 201-205, R235, K240, V270, D467, and W514; that span reads GAGAA.

It belongs to the FAD-dependent oxidoreductase family.

The protein localises to the mitochondrion. Induces apoptosis through a caspase dependent pathway. Reduces mitochondrial membrane potential. The polypeptide is Apoptosis-inducing factor 3 (Aifm3) (Mus musculus (Mouse)).